Here is a 245-residue protein sequence, read N- to C-terminus: MASLGVNIDHIANVRQARQTVEPDPVPMALLAELGGADGITVHLREDRRHIQDRDLDLLRATVRSRLNLEMAATAEMVGIALKIQPDMVTLVPERRQEVTTEGGLDVAAQQGSLKGMVDQLQVAGIPVSLFVDPVSQQLEAAFKSGARWVELHTGAYAEACWADQSFELARLTEATARARSLGLRVNAGHGLTYQNVEAVAAIEGIEELNIGHTIVARSIAVGLKEAVREMKRLVQNPRREPLFG.

Residue Asn-7 coordinates 3-amino-2-oxopropyl phosphate. 9 to 10 (DH) is a binding site for 1-deoxy-D-xylulose 5-phosphate. Position 18 (Arg-18) interacts with 3-amino-2-oxopropyl phosphate. Residue His-43 is the Proton acceptor of the active site. Arg-45 and His-50 together coordinate 1-deoxy-D-xylulose 5-phosphate. Glu-70 functions as the Proton acceptor in the catalytic mechanism. Residue Thr-100 participates in 1-deoxy-D-xylulose 5-phosphate binding. The Proton donor role is filled by His-190. 3-amino-2-oxopropyl phosphate is bound by residues Gly-191 and 212–213 (GH).

It belongs to the PNP synthase family. As to quaternary structure, homooctamer; tetramer of dimers.

It localises to the cytoplasm. It carries out the reaction 3-amino-2-oxopropyl phosphate + 1-deoxy-D-xylulose 5-phosphate = pyridoxine 5'-phosphate + phosphate + 2 H2O + H(+). The protein operates within cofactor biosynthesis; pyridoxine 5'-phosphate biosynthesis; pyridoxine 5'-phosphate from D-erythrose 4-phosphate: step 5/5. Functionally, catalyzes the complicated ring closure reaction between the two acyclic compounds 1-deoxy-D-xylulose-5-phosphate (DXP) and 3-amino-2-oxopropyl phosphate (1-amino-acetone-3-phosphate or AAP) to form pyridoxine 5'-phosphate (PNP) and inorganic phosphate. This Prochlorococcus marinus (strain MIT 9313) protein is Pyridoxine 5'-phosphate synthase.